Consider the following 924-residue polypeptide: MVSRMGWGGRRRRLGRWGDLGPGSVPLLPMPLPPPPPPSCRGPGGGRISIFSLSPAPHTRSSPSSFSPPTAGPPCSVLQGTGASQSCHSALPIPATPPTQAQPAMTPASASPSWGSHSTPPLAPATPTPSQQCPQDSPGLRVGPLIPEQDYERLEDCDPEGSQDSPIHGEEQQPLLHVPEGLRGSWHHIQNLDSFFTKIYSYHQRNGFACILLEDVFQLGQFIFIVTFTTFLLRCVDYNVLFANQPSNHTRPGPFHSKVTLSDAILPSAQCAERIRSSPLLVLLLVLAAGFWLVQLLRSVCNLFSYWDIQVFYREALHIPPEELSSVPWAEVQSRLLALQRSGGLCVQPRPLTELDIHHRILRYTNYQVALANKGLLPARCPLPWGGSAAFLSRGLALNVDLLLFRGPFSLFRGGWELPHAYKRSDQRGALAARWGRTVLLLAALNLALSPLVLAWQVLHVFYSHVELLRREPGALGARGWSRLARLQLRHFNELPHELRARLARAYRPAAAFLRTAAPPAPLRTLLARQLVFFAGALFAALLVLTVYDEDVLAVEHVLTAMTALGVTATVARSFIPEEQCQGRAPQLLLQTALAHMHYLPEEPGPGGRDRAYRQMAQLLQYRAVSLLEELLSPLLTPLFLLFWFRPRALEIIDFFHHFTVDVAGVGDICSFALMDVKRHGHPQWLSAGQTEASLSQRAEDGKTELSLMRFSLAHPLWRPPGHSSKFLGHLWGRVQQDAAAWGATSARGPSTPGVLSNCTSPLPEAFLANLFVHPLLPPRDLSPTAPCPAAATASLLASISRIAQDPSSVSPGGTGGQKLAQLPELASAEMSLHVIYLHQLHQQQQQQEPWGEAAASILSRPCSSPSQPPSPDEEKPSWSSDGSSPASSPRQQWGTQKARNLFPGGFQVTTDTQKEPDRASCTD.

Residues 1–144 (MVSRMGWGGR…QDSPGLRVGP (144 aa)) form a disordered region. Over 1 to 207 (MVSRMGWGGR…KIYSYHQRNG (207 aa)) the chain is Cytoplasmic. A compositionally biased stretch (low complexity) spans 17-27 (WGDLGPGSVPL). Pro residues predominate over residues 28-40 (LPMPLPPPPPPSC). The segment covering 78–88 (LQGTGASQSCH) has biased composition (polar residues). Residues 98–113 (PTQAQPAMTPASASPS) are compositionally biased toward low complexity. The Tyrosine-based sorting signal motif lies at 151–154 (YERL). Residues 208-228 (FACILLEDVFQLGQFIFIVTF) form a helical membrane-spanning segment. Over 229–276 (TTFLLRCVDYNVLFANQPSNHTRPGPFHSKVTLSDAILPSAQCAERIR) the chain is Lumenal. Residues 277 to 297 (SSPLLVLLLVLAAGFWLVQLL) form a helical membrane-spanning segment. The Cytoplasmic segment spans residues 298-438 (RSVCNLFSYW…GALAARWGRT (141 aa)). Residues 439-459 (VLLLAALNLALSPLVLAWQVL) lie within the membrane without spanning it. Residues 460-526 (HVFYSHVELL…AAPPAPLRTL (67 aa)) lie on the Cytoplasmic side of the membrane. The chain crosses the membrane as a helical span at residues 527–547 (LARQLVFFAGALFAALLVLTV). Topologically, residues 548–551 (YDED) are lumenal. Residues 552-572 (VLAVEHVLTAMTALGVTATVA) traverse the membrane as a helical segment. The Cytoplasmic segment spans residues 573–624 (RSFIPEEQCQGRAPQLLLQTALAHMHYLPEEPGPGGRDRAYRQMAQLLQYRA). Residues 625-645 (VSLLEELLSPLLTPLFLLFWF) lie within the membrane without spanning it. The Cytoplasmic portion of the chain corresponds to 646-924 (RPRALEIIDF…KEPDRASCTD (279 aa)). Positions 847-924 (QQEPWGEAAA…KEPDRASCTD (78 aa)) are disordered. Low complexity predominate over residues 878–890 (SWSSDGSSPASSP). Over residues 913–924 (TQKEPDRASCTD) the composition is skewed to basic and acidic residues.

It belongs to the ATG9 family. As to quaternary structure, homotrimer; forms a homotrimer with a central pore that forms a path between the two membrane leaflets. As to expression, highly expressed in placenta (trophoblast cells) and pituitary gland. Not expressed in vascular endothelial.

It localises to the preautophagosomal structure membrane. The enzyme catalyses a 1,2-diacyl-sn-glycero-3-phosphocholine(in) = a 1,2-diacyl-sn-glycero-3-phosphocholine(out). It carries out the reaction a 1,2-diacyl-sn-glycero-3-phospho-L-serine(in) = a 1,2-diacyl-sn-glycero-3-phospho-L-serine(out). It catalyses the reaction a 1,2-diacyl-sn-glycero-3-phosphoethanolamine(in) = a 1,2-diacyl-sn-glycero-3-phosphoethanolamine(out). Phospholipid scramblase involved in autophagy by mediating autophagosomal membrane expansion. Cycles between the preautophagosomal structure/phagophore assembly site (PAS) and the cytoplasmic vesicle pool and supplies membrane for the growing autophagosome. Lipid scramblase activity plays a key role in preautophagosomal structure/phagophore assembly by distributing the phospholipids that arrive through ATG2 (ATG2A or ATG2B) from the cytoplasmic to the luminal leaflet of the bilayer, thereby driving autophagosomal membrane expansion. In addition to autophagy, also plays a role in necrotic cell death. The protein is Autophagy-related protein 9B (ATG9B) of Homo sapiens (Human).